A 284-amino-acid chain; its full sequence is MEMO1 family protein STK_20620 (284 aa).

The protein belongs to the MEMO1 family.

The sequence is that of MEMO1 family protein STK_20620 from Sulfurisphaera tokodaii (strain DSM 16993 / JCM 10545 / NBRC 100140 / 7) (Sulfolobus tokodaii).